A 217-amino-acid chain; its full sequence is Large ribosomal subunit protein bL25 (217 aa).

The span at 195-211 shows a compositional bias: low complexity; sequence PAEGAAAAPAKGAAKGA. The tract at residues 195-217 is disordered; it reads PAEGAAAAPAKGAAKGAAKGGKK.

The protein belongs to the bacterial ribosomal protein bL25 family. CTC subfamily. In terms of assembly, part of the 50S ribosomal subunit; part of the 5S rRNA/L5/L18/L25 subcomplex. Contacts the 5S rRNA. Binds to the 5S rRNA independently of L5 and L18.

Its function is as follows. This is one of the proteins that binds to the 5S RNA in the ribosome where it forms part of the central protuberance. The protein is Large ribosomal subunit protein bL25 of Acidiphilium cryptum (strain JF-5).